The chain runs to 32 residues: Glutathione S-transferase 8.2 (32 aa).

Glutathione is bound at residue 21 to 22 (QS).

It belongs to the GST superfamily. Alpha family. As to quaternary structure, homodimer. In terms of processing, the N-terminus is blocked.

The protein resides in the cytoplasm. The enzyme catalyses RX + glutathione = an S-substituted glutathione + a halide anion + H(+). Conjugation of reduced glutathione to a wide number of exogenous and endogenous hydrophobic electrophiles. The protein is Glutathione S-transferase 8.2 of Dicentrarchus labrax (European seabass).